Consider the following 55-residue polypeptide: Large ribosomal subunit protein bL33 (55 aa).

This sequence belongs to the bacterial ribosomal protein bL33 family.

In Proteus mirabilis (strain HI4320), this protein is Large ribosomal subunit protein bL33.